A 410-amino-acid polypeptide reads, in one-letter code: MSSVIERFLRYVAIDTQSNEESQTTPSTGKQLNLARLLEQELKELGLQDARIQEGYVYGTLPANSTKAIPAIGFIAHMDTSPDFSGTNVKAQLVENYDGQDILLNPEHNLVLSPADFPELLDYIGKTLITTDGTTLLGADDKAGIAEIMTAIAYLTAHPEIEHGTICVAFTPDEEIGRGADQFDVAGFGADFAYTVDGGPIGELEYENFNAAKAIVKVKGRNVHPGNAKNKMINSILLANEYIVKLPPQETPATTEGYEGFYHLNDIRGDVEETTLYYIIRDFAEDSFAKRKETMLNLAEECNKKYGSGHFHVEITDQYKNMKEKIQPVMHIVDKAQKAMETVGVKPLIKPIRGGTDGSRLSFMGLPTPNLFTGGHNYHGRYEFIPTFAMEKSVEVILKIIELYAEEHSN.

His77 serves as a coordination point for Zn(2+). The active site involves Asp79. A Zn(2+)-binding site is contributed by Asp140. The Proton acceptor role is filled by Glu174. Positions 175, 197, and 379 each coordinate Zn(2+).

This sequence belongs to the peptidase M20B family. Zn(2+) is required as a cofactor.

It is found in the cytoplasm. The enzyme catalyses Release of the N-terminal residue from a tripeptide.. Its function is as follows. Cleaves the N-terminal amino acid of tripeptides. The protein is Peptidase T of Desulfitobacterium hafniense (strain Y51).